A 211-amino-acid chain; its full sequence is Regulator of G-protein signaling 2 (211 aa).

A necessary for membrane association region spans residues 32–66 (KMKRTLLKDWKTRLSYFLQNSSAPGKPKTGKKSKQ). The segment at 79–116 (LWAEAFDELLASKYGLAAFRAFLKSEFCEENIEFWLAC) is necessary to inhibit protein synthesis. The region spanning 83–199 (AFDELLASKY…LESEFYQDLC (117 aa)) is the RGS domain.

As to quaternary structure, interacts with GNAQ. Does not interact with GNAI1 and GNAI3. Interacts with EIF2B5. Interacts with PRKG1 (isoform alpha). Phosphorylated by protein kinase C. Phosphorylation by PRKG1 leads to activation of RGS2 activity. In terms of tissue distribution, expressed in a wide variety of tissues.

It is found in the cell membrane. The protein resides in the cytoplasm. It localises to the nucleus. Its subcellular location is the nucleolus. Functionally, regulates G protein-coupled receptor signaling cascades. Inhibits signal transduction by increasing the GTPase activity of G protein alpha subunits, thereby driving them into their inactive GDP-bound form. It is involved in the negative regulation of the angiotensin-activated signaling pathway. Plays a role in the regulation of blood pressure in response to signaling via G protein-coupled receptors and GNAQ. Plays a role in regulating the constriction and relaxation of vascular smooth muscle. Binds EIF2B5 and blocks its activity, thereby inhibiting the translation of mRNA into protein. The sequence is that of Regulator of G-protein signaling 2 (Rgs2) from Mus musculus (Mouse).